The primary structure comprises 336 residues: tRNA-modifying protein YgfZ (336 aa).

Positions 28 and 191 each coordinate folate.

This sequence belongs to the tRNA-modifying YgfZ family.

It localises to the cytoplasm. Its function is as follows. Folate-binding protein involved in regulating the level of ATP-DnaA and in the modification of some tRNAs. It is probably a key factor in regulatory networks that act via tRNA modification, such as initiation of chromosomal replication. The polypeptide is tRNA-modifying protein YgfZ (Hamiltonella defensa subsp. Acyrthosiphon pisum (strain 5AT)).